Here is a 201-residue protein sequence, read N- to C-terminus: Histone chaperone asf1a-A (201 aa).

It belongs to the ASF1 family. In terms of assembly, interacts with histone H3 (including both histone H3.1 and H3.3) and histone H4. Interacts with hira and p60.

The protein resides in the nucleus. Its function is as follows. Histone chaperone that facilitates histone deposition and histone exchange and removal during nucleosome assembly and disassembly. Not critical for histone deposition during nucleosome assembly. This Xenopus laevis (African clawed frog) protein is Histone chaperone asf1a-A (asf1aa).